Reading from the N-terminus, the 568-residue chain is General O-oligosaccharyltransferase (568 aa).

The next 12 membrane-spanning stretches (helical) occupy residues 17–37 (VAVM…LAWL), 46–66 (LTFA…ALFL), 78–98 (LALP…VVDF), 101–121 (ALLS…GYNL), 132–152 (FTLS…IACI), 176–196 (FAQP…CLYL), 214–234 (IVFA…LFFI), 251–271 (YAVL…PRFT), 349–369 (LLVW…LIWI), 376–396 (AKTT…IHTL), 397–417 (LEYP…MGLI), and 429–449 (VPVS…ALIW).

It belongs to the PglL O-oligosaccharyltransferase family.

The protein localises to the cell membrane. Catalyzes the O-glycosylation of multiple protein targets. Is responsible for general protein glycosylation within A.baylyi ADP1. Does not act as an O-antigen ligase. This Acinetobacter baylyi (strain ATCC 33305 / BD413 / ADP1) protein is General O-oligosaccharyltransferase.